Consider the following 272-residue polypeptide: Plastid division protein PDV1 (272 aa).

At 1–206 (MGEMEIEEIE…KRALGFNHVK (206 aa)) the chain is on the cytoplasmic side. A disordered region spans residues 40 to 61 (KPSNRSEKRKNPHGNSGEDKRP). Residues 78 to 102 (IQEAKSLNAIRTALENLEDQLEFFH) adopt a coiled-coil conformation. A helical membrane pass occupies residues 207 to 225 (GVLGNAAIFAISVVAMLHL). Over 226 to 272 (HQVATSEHHLQKKEDRFYRSQQRKTYGRDKSSADRSLDHLDVMMARG) the chain is Chloroplast intermembrane.

As to quaternary structure, interacts (via C-terminus) with CDP1/PARC6 (via C-terminus). Interacts with ARC5/DRP5B. As to expression, expressed in young developing leaves, root tips, shoot apices, and flower buds (sepals, petals, stamens, and pistils), but not in developed tissues.

The protein localises to the plastid. It is found in the chloroplast outer membrane. In terms of biological role, component of the plastid division machinery. Required to mediate the dissociation of ARC5/DRP5B from plastid outer envelope membranes (OEMs) at the midplastid constriction site in the cytoplasm, thus triggering ARC5/DRP5B ring turnover at the chloroplast division site. Binding to phosphatidylinositol 4-phosphate (PI4P) modulates negatively chloroplast division. This chain is Plastid division protein PDV1, found in Arabidopsis thaliana (Mouse-ear cress).